Consider the following 315-residue polypeptide: Probable cell division protein WhiA (315 aa).

A DNA-binding region (H-T-H motif) is located at residues 280–313 (SLRELGKMLNPPVGKSGVNHRLRRIEKIADELKQ).

Belongs to the WhiA family.

Involved in cell division and chromosome segregation. The sequence is that of Probable cell division protein WhiA from Clostridium botulinum (strain ATCC 19397 / Type A).